Here is a 381-residue protein sequence, read N- to C-terminus: MVKKEMIAMILAGGQGTRLKNLTKKIAKPAVPFGAKYRIIDFTLSNCINSGIDTVGVLTQYRPLSLLKHIGSGIPFDLNRLNGGVVLLSPYVKESEGYWYAGTAHAIFENIDFMNEYDPTYALILSGDHIYKMDYSKMLDFHKEKNANVTIATINVSFEEASRFGILNTNENNMVEEFEEKPKIPKSTKASMGVYIFNYQLLKDTFEELKSKGNNFQDFGHNILPYILKKYSKIFAYEFNGYWKDVGTISTFYEANLDLIKNHKNLDLREKNWTIFTKSSSHSPQYITSGGNVVNSLVANGAKIEGHVSNSVIFENVKIGKNTIIEDSVIMSNAIIGENSFIKKTIIMENTVVKEKMVLNSLNNQSLNEEDGIILYDGKEK.

Alpha-D-glucose 1-phosphate is bound by residues tyrosine 100, glycine 165, 180-181 (EK), and serine 191.

This sequence belongs to the bacterial/plant glucose-1-phosphate adenylyltransferase family. In terms of assembly, homotetramer.

The enzyme catalyses alpha-D-glucose 1-phosphate + ATP + H(+) = ADP-alpha-D-glucose + diphosphate. The protein operates within glycan biosynthesis; glycogen biosynthesis. Its function is as follows. Involved in the biosynthesis of ADP-glucose, a building block required for the elongation reactions to produce glycogen. Catalyzes the reaction between ATP and alpha-D-glucose 1-phosphate (G1P) to produce pyrophosphate and ADP-Glc. The protein is Glucose-1-phosphate adenylyltransferase of Mycoplasma mobile (strain ATCC 43663 / 163K / NCTC 11711) (Mesomycoplasma mobile).